The following is a 296-amino-acid chain: Bifunctional protein FolD (296 aa).

NADP(+) contacts are provided by residues 166-168 (GRS), S195, and T236.

It belongs to the tetrahydrofolate dehydrogenase/cyclohydrolase family. Homodimer.

It carries out the reaction (6R)-5,10-methylene-5,6,7,8-tetrahydrofolate + NADP(+) = (6R)-5,10-methenyltetrahydrofolate + NADPH. It catalyses the reaction (6R)-5,10-methenyltetrahydrofolate + H2O = (6R)-10-formyltetrahydrofolate + H(+). Its pathway is one-carbon metabolism; tetrahydrofolate interconversion. Functionally, catalyzes the oxidation of 5,10-methylenetetrahydrofolate to 5,10-methenyltetrahydrofolate and then the hydrolysis of 5,10-methenyltetrahydrofolate to 10-formyltetrahydrofolate. This Dehalococcoides mccartyi (strain CBDB1) protein is Bifunctional protein FolD.